Consider the following 1249-residue polypeptide: Minor capsid protein M1249L (1249 aa).

Belongs to the asfivirus M1249L family. As to quaternary structure, interacts with the minor capsid protein p17 and with the hexon capsid protein p72 capsomers; these interactions form a rigid zipper structure that stabilizes the capsomers. Interacts with host IRF3.

Its subcellular location is the virion. It is found in the host cytoplasm. Together with the penton and the other minor capsid proteins (p17, p49), forms a complicated network immediately below the outer capsid shell, stabilizing the whole capsid. In addition, blocks IFN-beta transactivation mediated by the cGAS-STING pathway and regulates the transcriptional activity of IFN-beta. Mechanistically, suppresses the phosphorylation of host key adapter protein TBK1 and degrades host IRF3 in the cytoplasm. In African swine fever virus (isolate Tick/Malawi/Lil 20-1/1983) (ASFV), this protein is Minor capsid protein M1249L.